The primary structure comprises 300 residues: (R)-3-hydroxydecanoyl-ACP:CoA transacylase (300 aa).

The AB hydrolase-1 domain occupies 29 to 253; it reads TIILVNGSLS…HTIRNAGHFI (225 aa).

Its pathway is polyester biosynthesis; polyhydroxyalkanoate biosynthesis. In terms of biological role, catalyzes the transfer of the acyl moiety from in vitro synthesized 3-hydroxydecanoyl-CoA to acyl carrier protein. The chain is (R)-3-hydroxydecanoyl-ACP:CoA transacylase (phaG) from Pseudomonas aeruginosa (strain ATCC 15692 / DSM 22644 / CIP 104116 / JCM 14847 / LMG 12228 / 1C / PRS 101 / PAO1).